We begin with the raw amino-acid sequence, 442 residues long: Putative arsenical pump membrane protein (442 aa).

11 helical membrane-spanning segments follow: residues 22 to 42 (IPATFGALMVLLCGSVSLADL), 56 to 76 (ILATMIMAIALESFGFFYWVA), 85 to 105 (GSGIKLFWLTNLLCFLMTIFL), 107 to 127 (NDGSILITTPILLLVLKYLGL), 136 to 156 (LLSGVLIATASSAPIGVSNIV), 174 to 194 (MMFVPSMMGLIFMTCLLFMFF), 250 to 270 (LFAASYTGISVPLVAVIGSFI), 294 to 314 (IFIFAFTMYVLIYGLHNIGFT), 328 to 347 (SLAHATFASGISTSVFSNLF), 378 to 398 (IIGSDIGSLLLPMGTLATLIW), and 419 to 439 (IIIIPLTVLFTLTCLYFWISW).

This sequence belongs to the ArsB family.

It localises to the cell membrane. This chain is Putative arsenical pump membrane protein (ywrK), found in Bacillus subtilis (strain 168).